Reading from the N-terminus, the 362-residue chain is NAD(P)H-quinone oxidoreductase subunit 1, chloroplastic (362 aa).

7 helical membrane-spanning segments follow: residues 26 to 48 (LIWI…VIVW), 97 to 119 (FSIG…PLGY), 126 to 148 (LSIG…LMAG), 163 to 185 (AAAQ…SLLS), 254 to 276 (LFYL…LYLG), 296 to 318 (IIGI…LFLF), and 338 to 360 (LGWK…FQLV).

This sequence belongs to the complex I subunit 1 family. In terms of assembly, NDH is composed of at least 16 different subunits, 5 of which are encoded in the nucleus.

It is found in the plastid. The protein resides in the chloroplast thylakoid membrane. It carries out the reaction a plastoquinone + NADH + (n+1) H(+)(in) = a plastoquinol + NAD(+) + n H(+)(out). The enzyme catalyses a plastoquinone + NADPH + (n+1) H(+)(in) = a plastoquinol + NADP(+) + n H(+)(out). NDH shuttles electrons from NAD(P)H:plastoquinone, via FMN and iron-sulfur (Fe-S) centers, to quinones in the photosynthetic chain and possibly in a chloroplast respiratory chain. The immediate electron acceptor for the enzyme in this species is believed to be plastoquinone. Couples the redox reaction to proton translocation, and thus conserves the redox energy in a proton gradient. This Zea mays (Maize) protein is NAD(P)H-quinone oxidoreductase subunit 1, chloroplastic (ndhA).